A 380-amino-acid polypeptide reads, in one-letter code: RNA binding protein fox-1 homolog 2 (380 aa).

Composition is skewed to polar residues over residues 1–20 and 36–56; these read MEKNKMVSQGNQEPTATPDT and NGLSTDYGSQHTQEYATQSTE. Residues 1–117 are disordered; that stretch reads MEKNKMVSQG…TPKRLHVSNI (117 aa). A compositionally biased stretch (low complexity) spans 72–102; the sequence is STPATSTANASSTTDGSQTEGQQSQTQNSEN. Residues 110-186 enclose the RRM domain; that stretch reads KRLHVSNIPF…RKIEVNNATA (77 aa).

The protein resides in the nucleus. The protein localises to the cytoplasm. In terms of biological role, RNA-binding protein that regulates alternative splicing events by binding to 5'-UGCAUGU-3' elements. Regulates alternative splicing of tissue-specific exons. The polypeptide is RNA binding protein fox-1 homolog 2 (rbfox2) (Xenopus tropicalis (Western clawed frog)).